A 293-amino-acid chain; its full sequence is TBC1 domain family member 7 (293 aa).

The Rab-GAP TBC domain occupies 50 to 231 (PLPSMYRALV…RVWDKVVSGS (182 aa)).

In terms of assembly, component of the TSC-TBC complex (also named Rhebulator complex), composed of 2 molecules of TSC1, 2 molecules of TSC2 and 1 molecule of TBC1D7. Interacts with TSC1 (via C-terminal half of the coiled-coil domain). In terms of tissue distribution, highly expressed in heart, and slightly in kidney, liver and placenta.

The protein localises to the lysosome membrane. Its subcellular location is the cytoplasmic vesicle. It localises to the cytoplasm. The protein resides in the cytosol. Functionally, non-catalytic component of the TSC-TBC complex, a multiprotein complex that acts as a negative regulator of the canonical mTORC1 complex, an evolutionarily conserved central nutrient sensor that stimulates anabolic reactions and macromolecule biosynthesis to promote cellular biomass generation and growth. The TSC-TBC complex acts as a GTPase-activating protein (GAP) for the small GTPase RHEB, a direct activator of the protein kinase activity of mTORC1. In absence of nutrients, the TSC-TBC complex inhibits mTORC1, thereby preventing phosphorylation of ribosomal protein S6 kinase (RPS6KB1 and RPS6KB2) and EIF4EBP1 (4E-BP1) by the mTORC1 signaling. The TSC-TBC complex is inactivated in response to nutrients, relieving inhibition of mTORC1. In Homo sapiens (Human), this protein is TBC1 domain family member 7.